The primary structure comprises 347 residues: N-acetyl-gamma-glutamyl-phosphate reductase (347 aa).

The active site involves Cys153.

Belongs to the NAGSA dehydrogenase family. Type 1 subfamily.

It is found in the cytoplasm. It carries out the reaction N-acetyl-L-glutamate 5-semialdehyde + phosphate + NADP(+) = N-acetyl-L-glutamyl 5-phosphate + NADPH + H(+). Its pathway is amino-acid biosynthesis; L-arginine biosynthesis; N(2)-acetyl-L-ornithine from L-glutamate: step 3/4. Its function is as follows. Catalyzes the NADPH-dependent reduction of N-acetyl-5-glutamyl phosphate to yield N-acetyl-L-glutamate 5-semialdehyde. This chain is N-acetyl-gamma-glutamyl-phosphate reductase, found in Mycobacterium avium (strain 104).